Consider the following 120-residue polypeptide: MAGSPDQEGFFNLLTHVQGDRMEEQRCSLQAGPGQNPESQGGPAPEMDNLMDMLVNTQGRRMDDQRVTVNSLPGFQPIGPKDGMQKRPGTLSPQPLLTPQDPAALSFRRNSSPQPQTQAP.

2 consecutive GoLoco domains span residues 7-29 and 47-69; these read QEGF…RCSL and MDNL…RVTV. Residues 16–120 form a disordered region; that stretch reads HVQGDRMEEQ…SSPQPQTQAP (105 aa). Residues 108–120 show a composition bias toward polar residues; the sequence is RRNSSPQPQTQAP. Serine 111 carries the post-translational modification Phosphoserine.

Cerebellum (Purkinje cells) and retinal bipolar neurons.

Its function is as follows. May function as a cell-type specific modulator for G protein-mediated cell signaling. The polypeptide is Purkinje cell protein 2 (Pcp2) (Mus musculus (Mouse)).